The primary structure comprises 860 residues: Transcription factor E2F8 (860 aa).

Disordered stretches follow at residues methionine 1–lysine 27 and aspartate 38–tryptophan 57. Serine 71 and serine 102 each carry phosphoserine. 2 consecutive DNA-binding regions follow at residues arginine 113–glycine 182 and arginine 261–glycine 347. 3 disordered regions span residues arginine 407–proline 433, leucine 532–aspartate 616, and glutamine 745–proline 803. 2 positions are modified to phosphoserine: serine 412 and serine 416. Composition is skewed to polar residues over residues serine 412–serine 429 and valine 542–lysine 554. Residues aspartate 555–alanine 565 show a composition bias toward basic and acidic residues.

The protein belongs to the E2F/DP family. In terms of assembly, interacts with HIF1A. Homodimer and heterodimer: mainly forms homodimers and, to a lesser extent, heterodimers with E2F8. Dimerization is important for DNA-binding. Highly expressed in liver, skin, thymus and testis. Expressed in trophoblast giant cells throughout placenta development (at protein level).

It is found in the nucleus. Functionally, atypical E2F transcription factor that participates in various processes such as angiogenesis and polyploidization of specialized cells. Mainly acts as a transcription repressor that binds DNA independently of DP proteins and specifically recognizes the E2 recognition site 5'-TTTC[CG]CGC-3'. Directly represses transcription of classical E2F transcription factors such as E2F1: component of a feedback loop in S phase by repressing the expression of E2F1, thereby preventing p53/TP53-dependent apoptosis. Plays a key role in polyploidization of cells in placenta and liver by regulating the endocycle, probably by repressing genes promoting cytokinesis and antagonizing action of classical E2F proteins (E2F1, E2F2 and/or E2F3). Required for placental development by promoting polyploidization of trophoblast giant cells. Acts as a promoter of sprouting angiogenesis, possibly by acting as a transcription activator: associates with HIF1A, recognizes and binds the VEGFA promoter, which is different from canonical E2 recognition site, and activates expression of the VEGFA gene. This Mus musculus (Mouse) protein is Transcription factor E2F8 (E2f8).